Reading from the N-terminus, the 656-residue chain is DNA ligase (656 aa).

Residues 32–36 and 81–82 contribute to the NAD(+) site; these read DAVYD and SL. Catalysis depends on lysine 112, which acts as the N6-AMP-lysine intermediate. Residues arginine 133, glutamate 167, and lysine 306 each coordinate NAD(+). Zn(2+)-binding residues include cysteine 400, cysteine 403, cysteine 416, and cysteine 421. The 80-residue stretch at 577–656 folds into the BRCT domain; that stretch reads KSSSVFNNKT…ELLKRLKELD (80 aa).

It belongs to the NAD-dependent DNA ligase family. LigA subfamily. It depends on Mg(2+) as a cofactor. Mn(2+) is required as a cofactor.

The enzyme catalyses NAD(+) + (deoxyribonucleotide)n-3'-hydroxyl + 5'-phospho-(deoxyribonucleotide)m = (deoxyribonucleotide)n+m + AMP + beta-nicotinamide D-nucleotide.. DNA ligase that catalyzes the formation of phosphodiester linkages between 5'-phosphoryl and 3'-hydroxyl groups in double-stranded DNA using NAD as a coenzyme and as the energy source for the reaction. It is essential for DNA replication and repair of damaged DNA. The sequence is that of DNA ligase from Helicobacter pylori (strain P12).